The sequence spans 511 residues: Probable G-protein coupled receptor 152 (511 aa).

A disordered region spans residues Met-1–Leu-20. The Extracellular segment spans residues Met-1–Thr-33. Residues Val-34–Ala-54 form a helical membrane-spanning segment. Topologically, residues Gly-55–Arg-65 are cytoplasmic. The helical transmembrane segment at Leu-66–Phe-86 threads the bilayer. Residues Gln-87 to Arg-105 are Extracellular-facing. Cys-104 and Cys-182 are joined by a disulfide. A helical membrane pass occupies residues Phe-106–Ser-126. The Cytoplasmic portion of the chain corresponds to Leu-127–Pro-148. The helical transmembrane segment at Leu-149–Phe-169 threads the bilayer. The Extracellular portion of the chain corresponds to Pro-170–Arg-194. Residues Met-195–Thr-215 form a helical membrane-spanning segment. Over Gln-216–Gln-258 the chain is Cytoplasmic. A helical transmembrane segment spans residues Leu-259–Val-279. The Extracellular portion of the chain corresponds to Tyr-280 to Asp-282. Residues Tyr-283–Leu-303 traverse the membrane as a helical segment. The Cytoplasmic portion of the chain corresponds to Arg-304–Thr-511. Disordered regions lie at residues Pro-328–Val-349, Ser-361–Gly-386, and Pro-407–Thr-511. 2 stretches are compositionally biased toward polar residues: residues Pro-335–Leu-345 and Val-369–Gly-386. A compositionally biased stretch (low complexity) spans Pro-419 to Val-433. 2 stretches are compositionally biased toward polar residues: residues Pro-435–Thr-453 and Ser-462–Gly-473.

Belongs to the G-protein coupled receptor 1 family.

Its subcellular location is the cell membrane. Orphan receptor. The protein is Probable G-protein coupled receptor 152 (Gpr152) of Mus musculus (Mouse).